A 460-amino-acid chain; its full sequence is Muscarinic acetylcholine receptor M1 (460 aa).

Topologically, residues 1 to 22 (MNTSAPPAVSPNITVLAPGKGP) are extracellular. Residues N2 and N12 are each glycosylated (N-linked (GlcNAc...) asparagine). The chain crosses the membrane as a helical span at residues 23-48 (WQVAFIGITTGLLSLATVTGNLLVLI). Topologically, residues 49-62 (SFKVNTELKTVNNY) are cytoplasmic. The chain crosses the membrane as a helical span at residues 63-84 (FLLSLACADLIIGTFSMNLYTT). Residues 85–95 (YLLMGHWALGT) lie on the Extracellular side of the membrane. Residues 96–121 (LACDLWLALDYVASNASVMNLLLISF) form a helical membrane-spanning segment. An intrachain disulfide couples C98 to C178. At 122–142 (DRYFSVTRPLSYRAKRTPRRA) the chain is on the cytoplasmic side. A helical transmembrane segment spans residues 143–164 (ALMIGLAWLVSFVLWAPAILFW). Residues 165-185 (QYLVGERTVLAGQCYIQFLSQ) lie on the Extracellular side of the membrane. The helical transmembrane segment at 186–209 (PIITFGTAMAAFYLPVTVMCTLYW) threads the bilayer. The Cytoplasmic segment spans residues 210–366 (RIYRETENRA…LVKEKKAART (157 aa)). Disordered regions lie at residues 225–256 (LQGSETPGKGGGSSSSSERSQPGAEGSPETPP), 274–297 (WKEEEEEDEGSMESLTSSEGEEPG), and 310–351 (EAQA…QLAK). Position 230 is a phosphothreonine (T230). Residues 238 to 247 (SSSSERSQPG) are compositionally biased toward low complexity. Over residues 328 to 343 (RPTKKGRDRAGKGQKP) the composition is skewed to basic residues. A helical transmembrane segment spans residues 367 to 390 (LSAILLAFILTWTPYNIMVLVSTF). Residues 391 to 397 (CKDCVPE) are Extracellular-facing. The helical transmembrane segment at 398 to 420 (TLWELGYWLCYVNSTINPMCYAL) threads the bilayer. Over 421 to 460 (CNKAFRDTFRLLLLCRWDKRRWRKIPKRPGSVHRTPSRQC) the chain is Cytoplasmic. T428 carries the post-translational modification Phosphothreonine. At S451 the chain carries Phosphoserine. T455 is modified (phosphothreonine). A Phosphoserine modification is found at S457.

This sequence belongs to the G-protein coupled receptor 1 family. Muscarinic acetylcholine receptor subfamily. CHRM1 sub-subfamily. In terms of assembly, interacts with GPRASP2. Interacts with TMEM147.

It is found in the cell membrane. The protein localises to the postsynaptic cell membrane. The muscarinic acetylcholine receptor mediates various cellular responses, including inhibition of adenylate cyclase, breakdown of phosphoinositides and modulation of potassium channels through the action of G proteins. Primary transducing effect is Pi turnover. The polypeptide is Muscarinic acetylcholine receptor M1 (CHRM1) (Homo sapiens (Human)).